A 238-amino-acid chain; its full sequence is Enoyl-CoA delta isomerase 3 (238 aa).

Belongs to the enoyl-CoA hydratase/isomerase family.

The protein resides in the cytoplasm. Its subcellular location is the nucleus. It carries out the reaction a (3Z)-enoyl-CoA = a 4-saturated (2E)-enoyl-CoA. The catalysed reaction is a (3E)-enoyl-CoA = a 4-saturated (2E)-enoyl-CoA. It functions in the pathway lipid metabolism; fatty acid beta-oxidation. Functionally, able to isomerize both 3-cis and 3-trans double bonds into the 2-trans form in a range of enoyl-CoA species. Essential for the beta oxidation of unsaturated fatty acids. The chain is Enoyl-CoA delta isomerase 3 from Arabidopsis thaliana (Mouse-ear cress).